The primary structure comprises 176 residues: Bifunctional protein PyrR (176 aa).

The PRPP-binding signature appears at 93–105 (VILVDDVLYTGRT).

The protein belongs to the purine/pyrimidine phosphoribosyltransferase family. PyrR subfamily. In terms of assembly, homodimer and homohexamer; in equilibrium.

The catalysed reaction is UMP + diphosphate = 5-phospho-alpha-D-ribose 1-diphosphate + uracil. In terms of biological role, regulates transcriptional attenuation of the pyrimidine nucleotide (pyr) operon by binding in a uridine-dependent manner to specific sites on pyr mRNA. This disrupts an antiterminator hairpin in the RNA and favors formation of a downstream transcription terminator, leading to a reduced expression of downstream genes. Its function is as follows. Also displays a weak uracil phosphoribosyltransferase activity which is not physiologically significant. The chain is Bifunctional protein PyrR from Streptococcus mutans serotype c (strain ATCC 700610 / UA159).